We begin with the raw amino-acid sequence, 319 residues long: tRNA-cytidine(32) 2-sulfurtransferase (319 aa).

The PP-loop motif motif lies at Ser43–Ser48. Residues Cys118, Cys121, and Cys209 each coordinate [4Fe-4S] cluster.

The protein belongs to the TtcA family. Homodimer. Mg(2+) is required as a cofactor. [4Fe-4S] cluster serves as cofactor.

Its subcellular location is the cytoplasm. It carries out the reaction cytidine(32) in tRNA + S-sulfanyl-L-cysteinyl-[cysteine desulfurase] + AH2 + ATP = 2-thiocytidine(32) in tRNA + L-cysteinyl-[cysteine desulfurase] + A + AMP + diphosphate + H(+). Its pathway is tRNA modification. Its function is as follows. Catalyzes the ATP-dependent 2-thiolation of cytidine in position 32 of tRNA, to form 2-thiocytidine (s(2)C32). The sulfur atoms are provided by the cysteine/cysteine desulfurase (IscS) system. This Neisseria gonorrhoeae (strain NCCP11945) protein is tRNA-cytidine(32) 2-sulfurtransferase.